The following is an 88-amino-acid chain: Large ribosomal subunit protein bL27 (88 aa).

This sequence belongs to the bacterial ribosomal protein bL27 family.

This is Large ribosomal subunit protein bL27 from Mycolicibacterium vanbaalenii (strain DSM 7251 / JCM 13017 / BCRC 16820 / KCTC 9966 / NRRL B-24157 / PYR-1) (Mycobacterium vanbaalenii).